The chain runs to 102 residues: Large ribosomal subunit protein bL21 (102 aa).

Belongs to the bacterial ribosomal protein bL21 family. Part of the 50S ribosomal subunit. Contacts protein L20.

This protein binds to 23S rRNA in the presence of protein L20. This Finegoldia magna (strain ATCC 29328 / DSM 20472 / WAL 2508) (Peptostreptococcus magnus) protein is Large ribosomal subunit protein bL21.